A 345-amino-acid polypeptide reads, in one-letter code: Adenylosuccinate synthetase (345 aa).

GTP contacts are provided by residues 18-24 and 48-50; these read GDEGKGK and GHT. Aspartate 19 functions as the Proton acceptor in the catalytic mechanism. Positions 19 and 48 each coordinate Mg(2+). Residues 19–22, 46–49, threonine 133, arginine 147, glutamine 185, threonine 200, and arginine 262 contribute to the IMP site; these read DEGK and NAGH. The active-site Proton donor is histidine 49. 258–264 serves as a coordination point for substrate; it reads TVTGRRR. GTP-binding positions include arginine 264, 290–292, and 330–332; these read GLD and STG.

This sequence belongs to the adenylosuccinate synthetase family. Homodimer. The cofactor is Mg(2+).

It localises to the cytoplasm. The enzyme catalyses IMP + L-aspartate + GTP = N(6)-(1,2-dicarboxyethyl)-AMP + GDP + phosphate + 2 H(+). The protein operates within purine metabolism; AMP biosynthesis via de novo pathway; AMP from IMP: step 1/2. Functionally, plays an important role in the de novo pathway of purine nucleotide biosynthesis. Catalyzes the first committed step in the biosynthesis of AMP from IMP. The polypeptide is Adenylosuccinate synthetase (Methanocaldococcus jannaschii (strain ATCC 43067 / DSM 2661 / JAL-1 / JCM 10045 / NBRC 100440) (Methanococcus jannaschii)).